Reading from the N-terminus, the 334-residue chain is GTP 3',8-cyclase (334 aa).

In terms of domain architecture, Radical SAM core spans 13-239 (KFHRKFYYLR…KVRSHHDGPA (227 aa)). Residue R22 coordinates GTP. Residues C29 and C33 each contribute to the [4Fe-4S] cluster site. An S-adenosyl-L-methionine-binding site is contributed by Y35. Residue C36 participates in [4Fe-4S] cluster binding. R73 contacts GTP. G77 serves as a coordination point for S-adenosyl-L-methionine. A GTP-binding site is contributed by T104. An S-adenosyl-L-methionine-binding site is contributed by S128. K165 contributes to the GTP binding site. M199 contacts S-adenosyl-L-methionine. [4Fe-4S] cluster is bound by residues C262 and C265. A GTP-binding site is contributed by 267–269 (RLR). Residue C279 participates in [4Fe-4S] cluster binding.

It belongs to the radical SAM superfamily. MoaA family. Monomer and homodimer. The cofactor is [4Fe-4S] cluster.

It carries out the reaction GTP + AH2 + S-adenosyl-L-methionine = (8S)-3',8-cyclo-7,8-dihydroguanosine 5'-triphosphate + 5'-deoxyadenosine + L-methionine + A + H(+). It participates in cofactor biosynthesis; molybdopterin biosynthesis. Functionally, catalyzes the cyclization of GTP to (8S)-3',8-cyclo-7,8-dihydroguanosine 5'-triphosphate. The sequence is that of GTP 3',8-cyclase from Vibrio parahaemolyticus serotype O3:K6 (strain RIMD 2210633).